A 333-amino-acid chain; its full sequence is uncharacterized protein (333 aa).

Residues 234–333 (PPLAPTSAPA…GLSSEFDSDD (100 aa)) form a disordered region. Residues 251-265 (VPPPVPAPPTPPPQE) are compositionally biased toward pro residues. Residues 324-333 (GLSSEFDSDD) are compositionally biased toward polar residues.

The protein resides in the cell projection. It is found in the cilium. The protein localises to the flagellum. This is an uncharacterized protein from Homo sapiens (Human).